Here is a 472-residue protein sequence, read N- to C-terminus: 2-oxoglutarate carboxylase small subunit (472 aa).

The region spanning 1-445 (MFKKVLVANR…TTRYLEEHPH (445 aa)) is the Biotin carboxylation domain. The ATP site is built by K115 and E199. Positions 119–316 (KEVMKRAGVP…IVKWQIRIAA (198 aa)) constitute an ATP-grasp domain. Residue R291 is part of the active site.

In terms of assembly, heterohexadecamer of 8 large subunits and 8 small subunits. Requires Mg(2+) as cofactor. Mn(2+) serves as cofactor. Co(2+) is required as a cofactor.

It catalyses the reaction hydrogencarbonate + 2-oxoglutarate + ATP = (S)-oxalosuccinate + ADP + phosphate + H(+). This Hydrogenobacter thermophilus (strain DSM 6534 / IAM 12695 / TK-6) protein is 2-oxoglutarate carboxylase small subunit.